The primary structure comprises 433 residues: C2H2 type master regulator of conidiophore development brlA (433 aa).

Disordered stretches follow at residues 23–64 and 240–265; these read PSEC…SHYH and KTHT…PVSR. Residues 30 to 48 are compositionally biased toward low complexity; that stretch reads TSSFSPLDSPTPTPTSLYS. Over residues 240-264 the composition is skewed to polar residues; it reads KTHTPSTPHRSVSMGTPSGSDTPVS. 2 C2H2-type zinc fingers span residues 321–345 and 351–376; these read FKCK…MKSH and HVCW…TKTH. The tract at residues 391–416 is disordered; it reads ETSQDFDPDFRGQLTPDGRPIYGSKL.

It localises to the nucleus. In terms of biological role, brlA, abaA and wetA are pivotal regulators of conidiophore development and conidium maturation. They act individually and together to regulate their own expression and that of numerous other sporulation-specific genes. Binds promoters of target genes at brlA response elements (BREs) containing the conserved sequence 5'-(C/A)(A/G)AGGG(G/A)-3'. Is not required for penicillin V production. The polypeptide is C2H2 type master regulator of conidiophore development brlA (Penicillium rubens (strain ATCC 28089 / DSM 1075 / NRRL 1951 / Wisconsin 54-1255) (Penicillium chrysogenum)).